Here is a 503-residue protein sequence, read N- to C-terminus: Poxin-Schlafen (503 aa).

The interval 1–236 (MFYAHAFGGY…SKEERVDYVL (236 aa)) is poxin-like. H15 (proton donor) is an active-site residue. The Shared with catalytic histidine of dimeric partner role is filled by Y136. Catalysis depends on K140, which acts as the Proton acceptor; shared with catalytic histidine of dimeric partner. The segment at 237-503 (MKRLESIHHL…PDEWVSHIKF (267 aa)) is schlafen-like.

The protein in the N-terminal section; belongs to the poxin family. This sequence in the C-terminal section; belongs to the Schlafen protein family. Subgroup poxviridae B3 subfamily. As to quaternary structure, homodimer.

The enzyme catalyses 2',3'-cGAMP + H2O = Gp(2'-5')Ap(3') + H(+). In terms of biological role, nuclease that is responsible for viral evasion of host cGAS-STING innate immunity. Cleaves 2',3'-cGAMP which is produced by host cGAS following recognition of intracellular foreign DNA and blocks the subsequent 2',3'-cGAMP-mediated activation of TMEM173/STING which normally spreads to adjacent cells and activates the interferon and NF-kappa-B immune responses. The chain is Poxin-Schlafen (OPG188) from Cynomys gunnisoni (Gunnison's prairie dog).